A 210-amino-acid polypeptide reads, in one-letter code: Guanylate kinase (210 aa).

The Guanylate kinase-like domain maps to 6–186; sequence GLLGIISAPS…ALIYLQSVIL (181 aa). ATP is bound at residue 13–20; that stretch reads APSGAGKS.

It belongs to the guanylate kinase family.

The protein resides in the cytoplasm. The catalysed reaction is GMP + ATP = GDP + ADP. Essential for recycling GMP and indirectly, cGMP. The chain is Guanylate kinase from Blochmanniella floridana.